The chain runs to 275 residues: Putative ribonuclease-like protein YfkH (275 aa).

The next 6 membrane-spanning stretches (helical) occupy residues 23-43, 83-103, 126-146, 172-192, 199-219, and 235-255; these read LAYF…TLTA, LLSF…NAIV, IFLT…PVFG, WGVS…IAPN, FVMP…TLFS, and IGGI…IILG.

The protein resides in the cell membrane. The chain is Putative ribonuclease-like protein YfkH (yfkH) from Bacillus subtilis (strain 168).